The sequence spans 357 residues: GTPase Obg (357 aa).

Residues 1 to 159 (MKFVDEAFID…RNLKLELKVL (159 aa)) enclose the Obg domain. Residues 160–334 (ADVGLLGMPN…LIQAIYQHVR (175 aa)) form the OBG-type G domain. GTP contacts are provided by residues 166–173 (GMPNAGKS), 191–195 (FTTLH), 213–216 (DIPG), 284–287 (NKLD), and 315–317 (SAL). Mg(2+) is bound by residues S173 and T193.

It belongs to the TRAFAC class OBG-HflX-like GTPase superfamily. OBG GTPase family. As to quaternary structure, monomer. Mg(2+) is required as a cofactor.

It is found in the cytoplasm. An essential GTPase which binds GTP, GDP and possibly (p)ppGpp with moderate affinity, with high nucleotide exchange rates and a fairly low GTP hydrolysis rate. Plays a role in control of the cell cycle, stress response, ribosome biogenesis and in those bacteria that undergo differentiation, in morphogenesis control. The protein is GTPase Obg of Paracidovorax citrulli (strain AAC00-1) (Acidovorax citrulli).